The chain runs to 524 residues: Alkaline phosphatase, tissue-nonspecific isozyme (524 aa).

Positions 1 to 17 (MISPFLVLAIGTCLTNS) are cleaved as a signal peptide. Aspartate 60 lines the Mg(2+) pocket. 2 residues coordinate Zn(2+): aspartate 60 and serine 110. Catalysis depends on serine 110, which acts as the Phosphoserine intermediate. Serine 110 bears the Phosphoserine mark. Cysteine 139 and cysteine 201 are disulfide-bonded. Asparagine 140 is a glycosylation site (N-linked (GlcNAc...) asparagine). Threonine 173 contributes to the Mg(2+) binding site. N-linked (GlcNAc...) asparagine glycosylation is present at asparagine 230. Residue glutamate 235 participates in Ca(2+) binding. The N-linked (GlcNAc...) asparagine glycan is linked to asparagine 271. Positions 290 and 291 each coordinate Ca(2+). Asparagine 302 carries N-linked (GlcNAc...) asparagine glycosylation. Ca(2+) is bound at residue aspartate 306. Residue glutamate 332 participates in Mg(2+) binding. Aspartate 337, histidine 341, aspartate 378, and histidine 379 together coordinate Zn(2+). N-linked (GlcNAc...) asparagine glycosylation occurs at asparagine 430. Residue histidine 454 coordinates Zn(2+). An intrachain disulfide couples cysteine 489 to cysteine 497. A lipid anchor (GPI-anchor amidated serine) is attached at serine 499. A propeptide spans 500 to 524 (ASSAGGPSPGPLFLLLALPSLGILF) (removed in mature form).

This sequence belongs to the alkaline phosphatase family. As to quaternary structure, homodimer. Mg(2+) is required as a cofactor. The cofactor is Zn(2+). Requires Ca(2+) as cofactor. Post-translationally, N-glycosylated.

The protein localises to the cell membrane. It localises to the extracellular vesicle membrane. Its subcellular location is the mitochondrion membrane. It is found in the mitochondrion intermembrane space. The catalysed reaction is a phosphate monoester + H2O = an alcohol + phosphate. It catalyses the reaction diphosphate + H2O = 2 phosphate + H(+). The enzyme catalyses pyridoxal 5'-phosphate + H2O = pyridoxal + phosphate. It carries out the reaction phosphoethanolamine + H2O = ethanolamine + phosphate. The catalysed reaction is N-phosphocreatine + H2O = creatine + phosphate. It catalyses the reaction ATP + H2O = ADP + phosphate + H(+). The enzyme catalyses ADP + H2O = AMP + phosphate + H(+). It carries out the reaction AMP + H2O = adenosine + phosphate. Its activity is regulated as follows. Phosphatase activity is specifically inhibited by 5-((5-chloro-2-methoxyphenyl)sulfonamido)nicotinamide (SBI-425). Alkaline phosphatase that metabolizes various phosphate compounds and plays a key role in skeletal mineralization and adaptive thermogenesis. Has broad substrate specificity and can hydrolyze a considerable variety of compounds: however, only a few substrates, such as diphosphate (inorganic pyrophosphate; PPi), pyridoxal 5'-phosphate (PLP) and N-phosphocreatine are natural substrates. Plays an essential role in skeletal and dental mineralization via its ability to hydrolyze extracellular diphosphate, a potent mineralization inhibitor, to phosphate: it thereby promotes hydroxyapatite crystal formation and increases inorganic phosphate concentration. Acts in a non-redundant manner with PHOSPHO1 in skeletal mineralization: while PHOSPHO1 mediates the initiation of hydroxyapatite crystallization in the matrix vesicles (MVs), ALPL/TNAP catalyzes the spread of hydroxyapatite crystallization in the extracellular matrix. Also promotes dephosphorylation of osteopontin (SSP1), an inhibitor of hydroxyapatite crystallization in its phosphorylated state; it is however unclear whether ALPL/TNAP mediates SSP1 dephosphorylation via a direct or indirect manner. Catalyzes dephosphorylation of PLP to pyridoxal (PL), the transportable form of vitamin B6, in order to provide a sufficient amount of PLP in the brain, an essential cofactor for enzymes catalyzing the synthesis of diverse neurotransmitters. Additionally, also able to mediate ATP degradation in a stepwise manner to adenosine, thereby regulating the availability of ligands for purinergic receptors. Also capable of dephosphorylating microbial products, such as lipopolysaccharides (LPS) as well as other phosphorylated small-molecules, such as poly-inosine:cytosine (poly I:C). Acts as a key regulator of adaptive thermogenesis as part of the futile creatine cycle: localizes to the mitochondria of thermogenic fat cells and acts by mediating hydrolysis of N-phosphocreatine to initiate a futile cycle of creatine dephosphorylation and phosphorylation. During the futile creatine cycle, creatine and N-phosphocreatine are in a futile cycle, which dissipates the high energy charge of N-phosphocreatine as heat without performing any mechanical or chemical work. This Felis catus (Cat) protein is Alkaline phosphatase, tissue-nonspecific isozyme (ALPL).